The following is a 203-amino-acid chain: MSEILELEAESRTEFGTGAARALRRAGRVPAIIYGAGKTPVSISLEEKEITKYYRKPAFISQLINLTIDKKKYKVLPKAVELHPVTDIVRHVDFVFLEEKTQKMEVPVVYEGKERALGVKRGGYFNIVKRRVTLLCDVNNIPRNITIDVTNMPMATSLKSSKIELPKGCSFVTKKEFVLATIIGRRGAKTEAEGEQQAAEAGK.

This sequence belongs to the bacterial ribosomal protein bL25 family. CTC subfamily. Part of the 50S ribosomal subunit; part of the 5S rRNA/L5/L18/L25 subcomplex. Contacts the 5S rRNA. Binds to the 5S rRNA independently of L5 and L18.

Its function is as follows. This is one of the proteins that binds to the 5S RNA in the ribosome where it forms part of the central protuberance. In Rickettsia africae (strain ESF-5), this protein is Large ribosomal subunit protein bL25.